A 251-amino-acid chain; its full sequence is Protein FAM216A (251 aa).

Positions 1-41 are disordered; that stretch reads MPSRWPGVAGPPALARTEGGEGSAGHSYPQNSKGTGEQHKA.

It belongs to the FAM216 family.

The chain is Protein FAM216A (Fam216a) from Mus musculus (Mouse).